Reading from the N-terminus, the 171-residue chain is Signal peptidase complex catalytic subunit SEC11 (171 aa).

The Cytoplasmic segment spans residues 1 to 6; the sequence is MNIRQQ. A helical; Signal-anchor for type II membrane protein transmembrane segment spans residues 7-24; that stretch reads LVQLLNLAMVLSTAFMFW. Topologically, residues 25–171 are lumenal; it reads KGLGLVTNSN…MALSTLLTRE (147 aa). Residues serine 44, histidine 83, and aspartate 113 each act as charge relay system in the active site. A C-terminal short (CTS) helix region spans residues 157–168; sequence GLLGLMALSTLL.

The protein belongs to the peptidase S26B family. As to quaternary structure, component of the signal peptidase complex (SPC) composed of a catalytic subunit SEC11 and three accessory subunits SPC1, SPC2 and SPC3. The complex induces a local thinning of the ER membrane which is used to measure the length of the signal peptide (SP) h-region of protein substrates. This ensures the selectivity of the complex towards h-regions shorter than 18-20 amino acids. SPC associates with the translocon complex.

The protein localises to the endoplasmic reticulum membrane. The catalysed reaction is Cleavage of hydrophobic, N-terminal signal or leader sequences from secreted and periplasmic proteins.. Catalytic component of the signal peptidase complex (SPC) which catalyzes the cleavage of N-terminal signal sequences from nascent proteins as they are translocated into the lumen of the endoplasmic reticulum. Specifically cleaves N-terminal signal peptides that contain a hydrophobic alpha-helix (h-region) shorter than 18-20 amino acids. The sequence is that of Signal peptidase complex catalytic subunit SEC11 (SEC11) from Komagataella phaffii (strain GS115 / ATCC 20864) (Yeast).